A 256-amino-acid polypeptide reads, in one-letter code: Transcription factor BHLH094 (256 aa).

The interval 1 to 125 is disordered; sequence MDPAPSLAAE…TPPEPPKQDY (125 aa). Residues 79–97 are compositionally biased toward basic and acidic residues; sequence PEAKRLKPMKSSDKNDSLR. The segment at 134-147 is basic motif; degenerate; it reads QATDSHSLAERARR. Positions 134-184 constitute a bHLH domain; sequence QATDSHSLAERARREKISERMKILQDLVPGCNKVIGKASVLDEIINYIQSL. The interval 148–184 is helix-loop-helix motif; sequence EKISERMKILQDLVPGCNKVIGKASVLDEIINYIQSL.

Belongs to the bHLH protein family. Interacts with RSS3. Forms a ternary complex with RSS3 and TIFY11A/JAZ9 in the nucleus.

It localises to the nucleus. In terms of biological role, transcription factor that forms a ternary complex with RSS3 and TIFY11A/JAZ9 to negatively regulate jasmonate-responsive genes. This chain is Transcription factor BHLH094, found in Oryza sativa subsp. japonica (Rice).